The chain runs to 450 residues: Tubulin beta chain (450 aa).

The GTP site is built by Glu69, Ser138, Gly142, Thr143, Gly144, Asn204, and Asn226. Glu69 is a Mg(2+) binding site. A disordered region spans residues 427–450 (DATIDQEFEDEEEVEEQNDDSDEQ). Residues 430-450 (IDQEFEDEEEVEEQNDDSDEQ) show a composition bias toward acidic residues.

Belongs to the tubulin family. In terms of assembly, dimer of alpha and beta chains. A typical microtubule is a hollow water-filled tube with an outer diameter of 25 nm and an inner diameter of 15 nM. Alpha-beta heterodimers associate head-to-tail to form protofilaments running lengthwise along the microtubule wall with the beta-tubulin subunit facing the microtubule plus end conferring a structural polarity. Microtubules usually have 13 protofilaments but different protofilament numbers can be found in some organisms and specialized cells. Requires Mg(2+) as cofactor.

Its subcellular location is the cytoplasm. The protein localises to the cytoskeleton. In terms of biological role, tubulin is the major constituent of microtubules, a cylinder consisting of laterally associated linear protofilaments composed of alpha- and beta-tubulin heterodimers. Microtubules grow by the addition of GTP-tubulin dimers to the microtubule end, where a stabilizing cap forms. Below the cap, tubulin dimers are in GDP-bound state, owing to GTPase activity of alpha-tubulin. The chain is Tubulin beta chain from Bombyx mori (Silk moth).